The following is a 278-amino-acid chain: Checkpoint protein Hus1-like (278 aa).

The protein belongs to the HUS1 family. In terms of assembly, component of the 9-1-1 checkpoint clamp complex consisting of Rad9 isoform A, Rad1 and Hus1-like; the interactions with Rad1 and Rad9 are direct. This complex probably also forms with Rad9 isoform B, however 9-1-1 complex containing Rad9 isoform A localizes to the nuclear periphery. As to expression, expressed in ovary.

It is found in the cytoplasm. It localises to the nucleus envelope. Component of the 9-1-1 checkpoint clamp complex. Involved in both meiotic and somatic DNA damage responses. Essential for activation of the meiotic checkpoint in response to double-strand DNA breaks; required for the S-phase checkpoint but not the G2-M phase checkpoint. Involved in double strand break repair by homologous recombination during meiosis; influences the organization of chromosomal DNA in the meiotic nucleus. The chain is Checkpoint protein Hus1-like from Drosophila melanogaster (Fruit fly).